The sequence spans 396 residues: Lysophospholipid transporter LplT (396 aa).

Topologically, residues 1–17 (MSESVHTNTSLWSKGMK) are periplasmic. The chain crosses the membrane as a helical span at residues 18-38 (AVIVAQFLSAFGDNALLFATL). Residues 39 to 52 (ALLKAQFYPEWSQP) lie on the Cytoplasmic side of the membrane. The helical transmembrane segment at 53–73 (ILQMVFVGAYILLAPFVGQVA) threads the bilayer. The Periplasmic portion of the chain corresponds to 74 to 90 (DSFAKGRVMMFANGLKL). Residues 91-111 (LGAASICFGINPFLGYTLVGV) traverse the membrane as a helical segment. At 112-144 (GAAAYSPAKYGILGELTTGSKLVKANGLMEASA) the chain is on the cytoplasmic side. The helical transmembrane segment at 145–165 (IAAILLGSVAGGVLADWHVLV) threads the bilayer. Position 166 (Ala166) is a topological domain, periplasmic. Residues 167–187 (LAACALAYGGAVVANIYIPKL) traverse the membrane as a helical segment. The Cytoplasmic portion of the chain corresponds to 188 to 225 (AARPGQSWNLINMTRSFLNACTSLWCNGETRFSLVGAS). Residues 226–246 (LFWGAGVTLRFLLVLWVPVAL) traverse the membrane as a helical segment. At 247–255 (GITDNATPT) the chain is on the periplasmic side. Residues 256–276 (YLNAMVAIGIVVGAGAAAKLV) form a helical membrane-spanning segment. At 277 to 279 (TLE) the chain is on the cytoplasmic side. Residues 280–300 (TVSRCMPAGILIGVVVLIFSL) traverse the membrane as a helical segment. Topologically, residues 301-303 (QHE) are periplasmic. The chain crosses the membrane as a helical span at residues 304-324 (LLPAYALLMLIGVLGGFFVVP). Residues 325–342 (LNALLQERGKKSVGAGNA) are Cytoplasmic-facing. A helical transmembrane segment spans residues 343-363 (IAVQNLGENSAMLLMLGIYSL). Residues 364-365 (AV) lie on the Periplasmic side of the membrane. Residues 366-386 (MVGIPVVPIGIGFGALFALAI) traverse the membrane as a helical segment. The Cytoplasmic segment spans residues 387–396 (TALWIWQRRH).

The protein belongs to the major facilitator superfamily. LplT (TC 2.A.1.42) family.

The protein localises to the cell inner membrane. Functionally, catalyzes the facilitated diffusion of 2-acyl-glycero-3-phosphoethanolamine (2-acyl-GPE) into the cell. The sequence is that of Lysophospholipid transporter LplT from Shigella flexneri serotype 5b (strain 8401).